Reading from the N-terminus, the 237-residue chain is Small ribosomal subunit protein uS3 (237 aa).

The KH type-2 domain maps to 39-107 (IRAYLMEELK…ETHLNIVEVR (69 aa)). The segment at 213 to 237 (MASERRATESDNQGGSGRERRRENA) is disordered.

Belongs to the universal ribosomal protein uS3 family. Part of the 30S ribosomal subunit. Forms a tight complex with proteins S10 and S14.

Binds the lower part of the 30S subunit head. Binds mRNA in the 70S ribosome, positioning it for translation. The protein is Small ribosomal subunit protein uS3 of Rhizobium meliloti (strain 1021) (Ensifer meliloti).